We begin with the raw amino-acid sequence, 403 residues long: Cystinosin homolog (403 aa).

Residues 1-122 (MKLPVSILFF…YSRITVIRSH (122 aa)) are Lumenal-facing. 4 N-linked (GlcNAc...) asparagine glycosylation sites follow: Asn45, Asn52, Asn78, and Asn96. Residues 123–143 (WLAILIQIVGWTYFAAWSVSF) traverse the membrane as a helical segment. A PQ-loop 1 domain is found at 124 to 190 (LAILIQIVGW…MYYNSHVKNI (67 aa)). At 144–162 (YPQMYLNFKRKSVVGLNFD) the chain is on the cytoplasmic side. A helical membrane pass occupies residues 163–183 (FLSLNLVGFGAYAMFNLLMYY). Residues 184–206 (NSHVKNIYSMENPRSPPPVLLND) lie on the Lumenal side of the membrane. A helical membrane pass occupies residues 207–227 (VVFAVHAFLACFVTILQCIFY). The Cytoplasmic portion of the chain corresponds to 228-237 (ERDQQRISTK). A helical transmembrane segment spans residues 238-258 (CIILIIGLVSFGFVSVVVTVL). Residues 259-260 (NK) lie on the Lumenal side of the membrane. The chain crosses the membrane as a helical span at residues 261-283 (ITILDFVVSLSYIKMAVTCCKYF). The PQ-loop 2 domain occupies 266–326 (FVVSLSYIKM…MVLQAINVND (61 aa)). At 284–294 (PQAYFNYQRKS) the chain is on the cytoplasmic side. A helical transmembrane segment spans residues 295-315 (TVGWSIGNILLDFTGGSLDIL). Over 316–336 (QMVLQAINVNDWSAFYANPVK) the chain is Lumenal. The helical transmembrane segment at 337 to 357 (FGLGFVSIFFDIIFMIQHYAL) threads the bilayer. Residues 358-403 (YPDAEVPHNEYHGVDNPDPDSIVRDAEHGAADNESMESTDPIIVHD) are Cytoplasmic-facing. Residues 374–388 (PDPDSIVRDAEHGAA) show a composition bias toward basic and acidic residues. The segment at 374-403 (PDPDSIVRDAEHGAADNESMESTDPIIVHD) is disordered.

This sequence belongs to the cystinosin family.

It localises to the lysosome membrane. It is found in the cytoplasmic vesicle. The protein resides in the phagosome. It carries out the reaction L-cystine(out) + H(+)(out) = L-cystine(in) + H(+)(in). Cystine/H(+) symporter that mediates export of cystine, the oxidized dimer of cysteine, from lysosomes. May play a role in the degradation of engulfed apoptotic cells. This is Cystinosin homolog (ctns-1) from Caenorhabditis briggsae.